Consider the following 673-residue polypeptide: UvrABC system protein B (673 aa).

In terms of domain architecture, Helicase ATP-binding spans 29-188 (EGLNDGLAHQ…LAELQYTRND (160 aa)). 42–49 (GVTGSGKT) provides a ligand contact to ATP. Positions 95 to 118 (YYDYYQPEAYVPSSDTFIEKDASI) match the Beta-hairpin motif. The region spanning 434–600 (QVDDVLSEIH…ALNKKVGELL (167 aa)) is the Helicase C-terminal domain. The segment at 607–632 (KPKRGKQAVKVEEKSANTYKPKSRKE) is disordered. The 36-residue stretch at 634–669 (EKELKQLEQQMRDFAKDLEFEKAAAVRDKIGQLKAV) folds into the UVR domain.

This sequence belongs to the UvrB family. In terms of assembly, forms a heterotetramer with UvrA during the search for lesions. Interacts with UvrC in an incision complex.

It is found in the cytoplasm. Functionally, the UvrABC repair system catalyzes the recognition and processing of DNA lesions. A damage recognition complex composed of 2 UvrA and 2 UvrB subunits scans DNA for abnormalities. Upon binding of the UvrA(2)B(2) complex to a putative damaged site, the DNA wraps around one UvrB monomer. DNA wrap is dependent on ATP binding by UvrB and probably causes local melting of the DNA helix, facilitating insertion of UvrB beta-hairpin between the DNA strands. Then UvrB probes one DNA strand for the presence of a lesion. If a lesion is found the UvrA subunits dissociate and the UvrB-DNA preincision complex is formed. This complex is subsequently bound by UvrC and the second UvrB is released. If no lesion is found, the DNA wraps around the other UvrB subunit that will check the other stand for damage. This chain is UvrABC system protein B, found in Actinobacillus pleuropneumoniae serotype 5b (strain L20).